The chain runs to 63 residues: Cecropin-1 (63 aa).

The first 21 residues, 1–21, serve as a signal peptide directing secretion; sequence MNFNKVFILVAIVIAIFAGQT. Residues 22–23 constitute a propeptide that is removed on maturation; the sequence is EA. Position 62 is an arginine amide (Arg-62).

Belongs to the cecropin family.

The protein resides in the secreted. Cecropins have lytic and antibacterial activity against several Gram-positive and Gram-negative bacteria. The protein is Cecropin-1 (CEC1) of Ceratitis capitata (Mediterranean fruit fly).